The sequence spans 525 residues: MVFLFPTGTIIIWVLTILLAVIPWYLLNKFWLKPKRFEKLLKAQGLQGDPYKLSALFMNNSKQDYILKLQQEAESKSIGLSKQAAPSIFSSHHQTVHKYGKNSFLWEGTTPSVIITDPDQIKEVFDRIYDFPKQKLRSIAKYFSFGIIKYEGEKWAKHRKIVNPAFHLDKLKGMLPAFSHSCNEMISKWKGLLSADGTCEVDVWPFLQNLTCDVISRTAFGSSYAEGEKIFQLLKKQAFLLVTTLDKNIPLSLWWLLETTTKKRMKEIERDIRESLEGIIEKREKALKNGETTNDDLLGILLQSNHAENQGHGNSKSIGMTTQEMIDECKLFYLVGQETTSTLLVWTMVLLGRYPEWQARARQEVLQVFGNQNQNFEGLSQLKIVTMILYEVLRLYPPAIYFNRALQKDLKLGNLSLPAGTLVSLPIILIHQDNDIWGDDAKEFKPERFAEGIAKATKGQVSYFPFGWGPRICIGQNFALLEAKIAITSLLQNFSFELSPNYVHVPTTVPFFQPKYGASIILHKL.

The helical transmembrane segment at 2-22 (VFLFPTGTIIIWVLTILLAVI) threads the bilayer. Cys473 contributes to the heme binding site.

Belongs to the cytochrome P450 family. Mainly expressed in leaves and seed pods and, to a lower extent, in flowers and stems.

The protein resides in the membrane. The protein operates within steroid metabolism; cholesterol metabolism. In terms of biological role, involved in the biosynthesis of spiroketal steroid and saponin natural products from cholesterol such as diosgenin and analogs (e.g. furostanol and spirostanol), plant defense compounds used as main precursors for the industrial production of steroid hormones. During the 5,6-spiroketalization of cholesterol, may catalyze the 27-monohydroxylation of furostanol-type steroid to an intermediate product that undergoes a stereospecific formation of the terminal heterocycle to yield diosgenin. The chain is Cytochrome P450 CYP72A613 from Trigonella foenum-graecum (Fenugreek).